The sequence spans 254 residues: UDP-2,3-diacylglucosamine hydrolase (254 aa).

Mn(2+) is bound by residues D8, H10, D41, N79, and H114. Position 79-80 (79-80 (NR)) interacts with substrate. 5 residues coordinate substrate: D122, S160, N164, K167, and H195. 2 residues coordinate Mn(2+): H195 and H197.

Belongs to the LpxH family. The cofactor is Mn(2+).

It is found in the cell inner membrane. The catalysed reaction is UDP-2-N,3-O-bis[(3R)-3-hydroxytetradecanoyl]-alpha-D-glucosamine + H2O = 2-N,3-O-bis[(3R)-3-hydroxytetradecanoyl]-alpha-D-glucosaminyl 1-phosphate + UMP + 2 H(+). Its pathway is glycolipid biosynthesis; lipid IV(A) biosynthesis; lipid IV(A) from (3R)-3-hydroxytetradecanoyl-[acyl-carrier-protein] and UDP-N-acetyl-alpha-D-glucosamine: step 4/6. Its function is as follows. Hydrolyzes the pyrophosphate bond of UDP-2,3-diacylglucosamine to yield 2,3-diacylglucosamine 1-phosphate (lipid X) and UMP by catalyzing the attack of water at the alpha-P atom. Involved in the biosynthesis of lipid A, a phosphorylated glycolipid that anchors the lipopolysaccharide to the outer membrane of the cell. The chain is UDP-2,3-diacylglucosamine hydrolase from Aeromonas salmonicida (strain A449).